A 779-amino-acid polypeptide reads, in one-letter code: Probable glutamine--tRNA ligase (779 aa).

Residues 268-270 (EPN) and 274-280 (HIGHAKA) each bind ATP. L-glutamine is bound by residues D300 and Y440. ATP-binding positions include T459, 488-489 (RL), and 496-498 (LSK).

This sequence belongs to the class-I aminoacyl-tRNA synthetase family.

The catalysed reaction is tRNA(Gln) + L-glutamine + ATP = L-glutaminyl-tRNA(Gln) + AMP + diphosphate. In Dictyostelium discoideum (Social amoeba), this protein is Probable glutamine--tRNA ligase (glnS).